The chain runs to 230 residues: ATP phosphoribosyltransferase (230 aa).

This sequence belongs to the ATP phosphoribosyltransferase family. Short subfamily. Heteromultimer composed of HisG and HisZ subunits.

The protein localises to the cytoplasm. It carries out the reaction 1-(5-phospho-beta-D-ribosyl)-ATP + diphosphate = 5-phospho-alpha-D-ribose 1-diphosphate + ATP. The protein operates within amino-acid biosynthesis; L-histidine biosynthesis; L-histidine from 5-phospho-alpha-D-ribose 1-diphosphate: step 1/9. Functionally, catalyzes the condensation of ATP and 5-phosphoribose 1-diphosphate to form N'-(5'-phosphoribosyl)-ATP (PR-ATP). Has a crucial role in the pathway because the rate of histidine biosynthesis seems to be controlled primarily by regulation of HisG enzymatic activity. This chain is ATP phosphoribosyltransferase (hisG), found in Chelativorans sp. (strain BNC1).